We begin with the raw amino-acid sequence, 144 residues long: Lysozyme C II (144 aa).

A signal peptide spans 1–15 (MRAVVVLLLVAVASA). Residues 16–144 (KVYDRCELAR…LRSYVAGCGV (129 aa)) form the C-type lysozyme domain. 4 disulfide bridges follow: Cys-21/Cys-142, Cys-45/Cys-130, Cys-79/Cys-95, and Cys-91/Cys-109. Active-site residues include Glu-50 and Asp-67.

Its subcellular location is the secreted. The enzyme catalyses Hydrolysis of (1-&gt;4)-beta-linkages between N-acetylmuramic acid and N-acetyl-D-glucosamine residues in a peptidoglycan and between N-acetyl-D-glucosamine residues in chitodextrins.. Functionally, lysozymes have primarily a bacteriolytic function; those in tissues and body fluids are associated with the monocyte-macrophage system and enhance the activity of immunoagents. Has antibacterial activity against the Gram positive bacterium P.citreus. Has no antibacterial activity against the Gram negative bacteria E.coli and Y.ruckeri. Does not have hemolytic activity against trout erythrocytes. The chain is Lysozyme C II from Oncorhynchus mykiss (Rainbow trout).